The primary structure comprises 961 residues: ATPase 7, plasma membrane-type (961 aa).

At 1 to 64 (MTDIEALKAI…EKKESKILKF (64 aa)) the chain is on the cytoplasmic side. A helical membrane pass occupies residues 65 to 84 (LGFMWNPLSWVMEAAALMAI). The Extracellular segment spans residues 85–96 (GLAHGGGKPADY). Residues 97-117 (HDFVGIVVLLLINSTISFVEE) form a helical membrane-spanning segment. Topologically, residues 118 to 246 (NNAGNAAAAL…GHFQKVLTAI (129 aa)) are cytoplasmic. A helical transmembrane segment spans residues 247–267 (GNFCICSIAVGMAIEIVVIYG). Residues 268-276 (LQKRGYRVG) lie on the Extracellular side of the membrane. The chain crosses the membrane as a helical span at residues 277 to 294 (IDNLLVLLIGGIPIAMPT). Topologically, residues 295–643 (VLSVTMAIGA…TSRAIFQRMK (349 aa)) are cytoplasmic. D332 functions as the 4-aspartylphosphate intermediate in the catalytic mechanism. Mg(2+)-binding residues include D588 and D592. A helical membrane pass occupies residues 644 to 665 (NYTIYAVSITIRIVMGFMLLCV). The Extracellular portion of the chain corresponds to 666-670 (FWEFD). The chain crosses the membrane as a helical span at residues 671–693 (FPPFMVLVIAILNDGTIMTISKD). Residues 694–709 (RVKPSPTPDCWKLKEI) lie on the Cytoplasmic side of the membrane. Residues 710-730 (FATGVVLGAYLAIMTVVFFWA) form a helical membrane-spanning segment. Topologically, residues 731–764 (AYETNFFHNIFHVRNFNQHHFKMKDKKVAAHLNE) are extracellular. A helical membrane pass occupies residues 765–785 (QMASAVYLQVSTISQALIFVT). Topologically, residues 786–797 (RSRSWSFVERPG) are cytoplasmic. The helical transmembrane segment at 798–818 (FLLVIAFLIAQLVASVISAMA) threads the bilayer. At 819–826 (NWPFAGIR) the chain is on the extracellular side. Residues 827 to 847 (SIGWGWTGVIWIFNIVTYMLL) form a helical membrane-spanning segment. Topologically, residues 848–961 (DPIKFLVRYA…EDPNSNNYTI (114 aa)) are cytoplasmic. T894 carries the post-translational modification Phosphothreonine. 2 positions are modified to phosphoserine: S910 and S942. The tract at residues 959–961 (YTI) is interaction with 14-3-3 proteins. At T960 the chain carries Phosphothreonine.

It belongs to the cation transport ATPase (P-type) (TC 3.A.3) family. Type IIIA subfamily. As to quaternary structure, binds to 14-3-3 proteins. The binding is induced by phosphorylation of Thr-960. Binding to 14-3-3 proteins activates the H(+)-ATPase. In terms of tissue distribution, expressed in guard cells, roots and leaves, and barely in mesophyll cells.

The protein localises to the membrane. It carries out the reaction ATP + H2O + H(+)(in) = ADP + phosphate + 2 H(+)(out). Its function is as follows. The plasma membrane H(+) ATPase of plants and fungi generates a proton gradient that drives the active transport of nutrients by H(+)-symport. The resulting external acidification and/or internal alkinization may mediate growth responses. In Arabidopsis thaliana (Mouse-ear cress), this protein is ATPase 7, plasma membrane-type (AHA7).